The sequence spans 214 residues: Pyridoxine/pyridoxamine 5'-phosphate oxidase (214 aa).

Substrate contacts are provided by residues 8-11 and Lys-66; that span reads RINY. FMN is bound by residues 61 to 66, 76 to 77, Arg-82, Lys-83, and Gln-105; these read RIVLIK and FT. Substrate contacts are provided by Tyr-123, Arg-127, and Ser-131. Residues 140–141 and Trp-184 contribute to the FMN site; that span reads QS. Residue 190–192 participates in substrate binding; that stretch reads RLH. Arg-194 contacts FMN.

It belongs to the pyridoxamine 5'-phosphate oxidase family. As to quaternary structure, homodimer. FMN serves as cofactor.

It carries out the reaction pyridoxamine 5'-phosphate + O2 + H2O = pyridoxal 5'-phosphate + H2O2 + NH4(+). The enzyme catalyses pyridoxine 5'-phosphate + O2 = pyridoxal 5'-phosphate + H2O2. It functions in the pathway cofactor metabolism; pyridoxal 5'-phosphate salvage; pyridoxal 5'-phosphate from pyridoxamine 5'-phosphate: step 1/1. It participates in cofactor metabolism; pyridoxal 5'-phosphate salvage; pyridoxal 5'-phosphate from pyridoxine 5'-phosphate: step 1/1. In terms of biological role, catalyzes the oxidation of either pyridoxine 5'-phosphate (PNP) or pyridoxamine 5'-phosphate (PMP) into pyridoxal 5'-phosphate (PLP). This chain is Pyridoxine/pyridoxamine 5'-phosphate oxidase, found in Burkholderia ambifaria (strain ATCC BAA-244 / DSM 16087 / CCUG 44356 / LMG 19182 / AMMD) (Burkholderia cepacia (strain AMMD)).